The sequence spans 93 residues: Putative pterin-4-alpha-carbinolamine dehydratase (93 aa).

This sequence belongs to the pterin-4-alpha-carbinolamine dehydratase family.

It carries out the reaction (4aS,6R)-4a-hydroxy-L-erythro-5,6,7,8-tetrahydrobiopterin = (6R)-L-erythro-6,7-dihydrobiopterin + H2O. This chain is Putative pterin-4-alpha-carbinolamine dehydratase, found in Thermomicrobium roseum (strain ATCC 27502 / DSM 5159 / P-2).